The sequence spans 208 residues: Guanylate kinase (208 aa).

One can recognise a Guanylate kinase-like domain in the interval 4 to 185 (GNLYILSAPS…ALADFQAILR (182 aa)). Residue 11 to 18 (APSGAGKS) participates in ATP binding.

The protein belongs to the guanylate kinase family.

It localises to the cytoplasm. It catalyses the reaction GMP + ATP = GDP + ADP. Its function is as follows. Essential for recycling GMP and indirectly, cGMP. The chain is Guanylate kinase (gmk) from Pasteurella multocida (strain Pm70).